Here is a 146-residue protein sequence, read N- to C-terminus: Universal stress protein A homolog 2 (146 aa).

It belongs to the universal stress protein A family. As to quaternary structure, homodimer.

The protein localises to the cytoplasm. Involved in stress response. The polypeptide is Universal stress protein A homolog 2 (uspA2) (Coxiella burnetii (strain RSA 493 / Nine Mile phase I)).